We begin with the raw amino-acid sequence, 259 residues long: Hydroxyethylthiazole kinase (259 aa).

A substrate-binding site is contributed by methionine 50. Residues arginine 122 and threonine 168 each coordinate ATP. Glycine 195 is a binding site for substrate.

This sequence belongs to the Thz kinase family. Mg(2+) serves as cofactor.

The catalysed reaction is 5-(2-hydroxyethyl)-4-methylthiazole + ATP = 4-methyl-5-(2-phosphooxyethyl)-thiazole + ADP + H(+). Its pathway is cofactor biosynthesis; thiamine diphosphate biosynthesis; 4-methyl-5-(2-phosphoethyl)-thiazole from 5-(2-hydroxyethyl)-4-methylthiazole: step 1/1. Catalyzes the phosphorylation of the hydroxyl group of 4-methyl-5-beta-hydroxyethylthiazole (THZ). In Escherichia coli O127:H6 (strain E2348/69 / EPEC), this protein is Hydroxyethylthiazole kinase.